The primary structure comprises 436 residues: MSQTTASITTAQWQQKRDQFVSKGVSNGNRSLAVKGEGAELYDLDGRRFIDFAGAIGTLNVGHSHPKVVEAVKRQAEELIHPGFNVMMYPTYIELAEKLCGIAPGSHEKKAIFLNSGAEAVENAVKIARKYTKRQGVVSFTRGFHGRTNMTMSMTSKVKPYKFGFGPFAPEVYQAPFPYYYQKPAGMSDESYDDMVIQAFNDFFIASVAPETVACVVMEPVQGEGGFIIPSKRFVQHVASFCKEHGIVFVADEIQTGFARTGTYFAIEHFDVVPDLITVSKSLAAGLPLSGVIGRAEMLDAAAPGELGGTYAGSPLGCAAALAVLDIIEEEGLNERSEEIGKIIEDKAYEWKQEFPFIGDIRRLGAMAAIEIVKDPDTREPDKTKAAAIAAYANQNGLLLLTAGINGNIIRFLTPLVISDSLLNEGLSILEAGLRA.

K281 is modified (N6-(pyridoxal phosphate)lysine).

Belongs to the class-III pyridoxal-phosphate-dependent aminotransferase family. Pyridoxal 5'-phosphate is required as a cofactor.

It carries out the reaction 4-aminobutanoate + 2-oxoglutarate = succinate semialdehyde + L-glutamate. The catalysed reaction is (S)-3-amino-2-methylpropanoate + 2-oxoglutarate = 2-methyl-3-oxopropanoate + L-glutamate. It participates in amino-acid degradation; 4-aminobutanoate degradation. The sequence is that of Probable 4-aminobutyrate aminotransferase (gabT) from Bacillus subtilis (strain 168).